Consider the following 267-residue polypeptide: MPRAIWKGWLAVGQVSCAVALHAAASTSDRVSFHTVNRKTGNRVRREFVDAVSGKPVPREDQVKGYEVAPDEFVQIDPDEIAATIPDSDKCLRIDAFVPCREVDGAYFDKPYYLTPAGDAALEAFALIREGMRARKAAALARTVLFRRLRTVMVRPHGAGLIAHTLNFDYEVRSSAEAFSEIPKLKVKGEMLELAKHIIGTKAGTFDPTAFDDRYDAALAELVKAKLEGRKPKRKAAPKKAREPSDLMAALRESVAATERPRRRKAG.

The region spanning 11-195 (AVGQVSCAVA…KVKGEMLELA (185 aa)) is the Ku domain. The segment at 229–267 (GRKPKRKAAPKKAREPSDLMAALRESVAATERPRRRKAG) is disordered.

Belongs to the prokaryotic Ku family. Homodimer. Interacts with LigD.

Its function is as follows. With LigD forms a non-homologous end joining (NHEJ) DNA repair enzyme, which repairs dsDNA breaks with reduced fidelity. Binds linear dsDNA with 5'- and 3'- overhangs but not closed circular dsDNA nor ssDNA. Recruits and stimulates the ligase activity of LigD. This Cereibacter sphaeroides (strain KD131 / KCTC 12085) (Rhodobacter sphaeroides) protein is Non-homologous end joining protein Ku.